A 439-amino-acid chain; its full sequence is Chromosomal replication initiator protein DnaA (439 aa).

The domain I, interacts with DnaA modulators stretch occupies residues 1–72 (MEQFSAFKLL…SKLYDDIRAV (72 aa)). Residues 72–99 (VRFVNEQDFFINLAKLEEDNRETLYQSS) are domain II. Residues 100 to 322 (GLSKNFTFKN…GIATKLLFYV (223 aa)) are domain III, AAA+ region. ATP contacts are provided by Gly-144, Gly-146, Lys-147, and Thr-148. A domain IV, binds dsDNA region spans residues 323–439 (KTTKQNLINN…LQDIITSLVI (117 aa)).

Belongs to the DnaA family. Oligomerizes as a right-handed, spiral filament on DNA at oriC.

The protein resides in the cytoplasm. Functionally, plays an essential role in the initiation and regulation of chromosomal replication. ATP-DnaA binds to the origin of replication (oriC) to initiate formation of the DNA replication initiation complex once per cell cycle. Binds the DnaA box (a 9 base pair repeat at the origin) and separates the double-stranded (ds)DNA. Forms a right-handed helical filament on oriC DNA; dsDNA binds to the exterior of the filament while single-stranded (ss)DNA is stabiized in the filament's interior. The ATP-DnaA-oriC complex binds and stabilizes one strand of the AT-rich DNA unwinding element (DUE), permitting loading of DNA polymerase. After initiation quickly degrades to an ADP-DnaA complex that is not apt for DNA replication. Binds acidic phospholipids. This chain is Chromosomal replication initiator protein DnaA, found in Mycoplasma pneumoniae (strain ATCC 29342 / M129 / Subtype 1) (Mycoplasmoides pneumoniae).